A 132-amino-acid chain; its full sequence is DNA-directed RNA polymerase subunit omega (132 aa).

The protein belongs to the RNA polymerase subunit omega family. The RNAP catalytic core consists of 2 alpha, 1 beta, 1 beta' and 1 omega subunit. When a sigma factor is associated with the core the holoenzyme is formed, which can initiate transcription.

It carries out the reaction RNA(n) + a ribonucleoside 5'-triphosphate = RNA(n+1) + diphosphate. Its function is as follows. Promotes RNA polymerase assembly. Latches the N- and C-terminal regions of the beta' subunit thereby facilitating its interaction with the beta and alpha subunits. In Bartonella bacilliformis (strain ATCC 35685 / KC583 / Herrer 020/F12,63), this protein is DNA-directed RNA polymerase subunit omega.